A 64-amino-acid polypeptide reads, in one-letter code: MLTKPYLLVSSKYMYTIPPDQTSVILEPYKASTSVNSLGVTSLQPYSEKKTGIDKFLNSAVLSA.

This is an uncharacterized protein from Saccharomyces cerevisiae (strain ATCC 204508 / S288c) (Baker's yeast).